Reading from the N-terminus, the 392-residue chain is Cobalt-precorrin-5B C(1)-methyltransferase (392 aa).

It belongs to the CbiD family.

It catalyses the reaction Co-precorrin-5B + S-adenosyl-L-methionine = Co-precorrin-6A + S-adenosyl-L-homocysteine. It participates in cofactor biosynthesis; adenosylcobalamin biosynthesis; cob(II)yrinate a,c-diamide from sirohydrochlorin (anaerobic route): step 6/10. Catalyzes the methylation of C-1 in cobalt-precorrin-5B to form cobalt-precorrin-6A. This chain is Cobalt-precorrin-5B C(1)-methyltransferase, found in Pelobacter propionicus (strain DSM 2379 / NBRC 103807 / OttBd1).